The primary structure comprises 309 residues: MEKVLVFGHKNPDTDAICSAIAYAELKKELGMNAEPVRLGEISGETQFALDSFKVEGPRFVETVANEVDNVILVDHNERQQSANDIESVRVLEVIDHHRIANFETSDPIYYRCEPVGCTATILNKMYKENGVTIRKEVAGLMLSAIISDSLLFKSPTCTEQDVAAARELAEIAGVDADSYGLEMLKAGADLSGKTMEQLISLDAKEFQMGNAKVEIAQVNAVDTNDVLVHQAELEKVITTVVEEKGLDLFLFVVTDILTNDSVGLAIGKATNVVEKAYNVTLQNNTATLKGVVSRKKQIVPVLTETFQA.

Residues histidine 9, aspartate 13, aspartate 15, aspartate 75, histidine 97, and aspartate 149 each contribute to the Mn(2+) site.

The protein belongs to the PPase class C family. The cofactor is Mn(2+).

It is found in the cytoplasm. It carries out the reaction diphosphate + H2O = 2 phosphate + H(+). This chain is Probable manganese-dependent inorganic pyrophosphatase, found in Bacillus mycoides (strain KBAB4) (Bacillus weihenstephanensis).